The chain runs to 281 residues: ATP phosphoribosyltransferase (281 aa).

The protein belongs to the ATP phosphoribosyltransferase family. Long subfamily. The cofactor is Mg(2+).

It localises to the cytoplasm. The enzyme catalyses 1-(5-phospho-beta-D-ribosyl)-ATP + diphosphate = 5-phospho-alpha-D-ribose 1-diphosphate + ATP. The protein operates within amino-acid biosynthesis; L-histidine biosynthesis; L-histidine from 5-phospho-alpha-D-ribose 1-diphosphate: step 1/9. Feedback inhibited by histidine. Functionally, catalyzes the condensation of ATP and 5-phosphoribose 1-diphosphate to form N'-(5'-phosphoribosyl)-ATP (PR-ATP). Has a crucial role in the pathway because the rate of histidine biosynthesis seems to be controlled primarily by regulation of HisG enzymatic activity. The sequence is that of ATP phosphoribosyltransferase from Salinispora tropica (strain ATCC BAA-916 / DSM 44818 / JCM 13857 / NBRC 105044 / CNB-440).